The chain runs to 70 residues: Gas vesicle protein A (70 aa).

This sequence belongs to the gas vesicle GvpA family. As to quaternary structure, the gas vesicle shell is 2 nm thick and consists of a single layer of this protein. It forms helical ribs nearly perpendicular to the long axis of the vesicle.

It localises to the gas vesicle shell. Functionally, gas vesicles are hollow, gas filled proteinaceous nanostructures found in some microorganisms. During planktonic growth they allow positioning of the organism at a favorable depth for light or nutrient acquisition. GvpA forms the protein shell. This is Gas vesicle protein A from Cereibacter sphaeroides (strain ATCC 17023 / DSM 158 / JCM 6121 / CCUG 31486 / LMG 2827 / NBRC 12203 / NCIMB 8253 / ATH 2.4.1.) (Rhodobacter sphaeroides).